The following is a 407-amino-acid chain: Putative glucose/galactose transporter (407 aa).

The next 12 helical transmembrane spans lie at 11-31 (GSLT…DILI), 47-67 (LIQF…GNVI), 70-90 (IGYP…CALF), 96-116 (FGSY…IVCL), 139-159 (VQAF…LLIF), 180-200 (VQMP…IMYL), 225-245 (FVFG…IGSF), 263-283 (HYLV…SVLM), 300-320 (IVLI…ALTF), 321-341 (VGFF…LNLG), 349-369 (GVIS…GAVT), and 378-398 (NLLY…FFAL).

It belongs to the major facilitator superfamily. FHS transporter (TC 2.A.1.7) family.

Its subcellular location is the cell inner membrane. Functionally, intake of glucose and galactose. In Helicobacter pylori (strain ATCC 700392 / 26695) (Campylobacter pylori), this protein is Putative glucose/galactose transporter (gluP).